Consider the following 80-residue polypeptide: Cell division protein ZapB (80 aa).

The stretch at 3-80 forms a coiled coil; it reads FEVFEKLESK…ALLGKMEDVQ (78 aa).

This sequence belongs to the ZapB family. In terms of assembly, homodimer. The ends of the coiled-coil dimer bind to each other, forming polymers. Interacts with FtsZ.

It localises to the cytoplasm. Non-essential, abundant cell division factor that is required for proper Z-ring formation. It is recruited early to the divisome by direct interaction with FtsZ, stimulating Z-ring assembly and thereby promoting cell division earlier in the cell cycle. Its recruitment to the Z-ring requires functional FtsA or ZipA. In Proteus mirabilis (strain HI4320), this protein is Cell division protein ZapB.